Reading from the N-terminus, the 546-residue chain is RFSVRANVKEISFDQSSRAALQAGIDKLADAVGLTLGPRGRNVVLDEFGSPKVVNDGVTIARAIELPDAMENAGAALIREVASKTNDSAGDGTTTASVLAREIIKHGLLSVTSGANPVSLKRGIDKTVQALIEELEKRARPVKGGSDIKAVATISAGNDELVGTMIADAIDKVGPDGVLSIESSSSFETTVEVEEGMEIDRGYISPQFVTNPEKLLVEFENARVLITDQKITAIKDIIPILEKTTQLRAPLLIIAEDVTGEALATLVVNKLRGVLNVVAVKAPGFGERRKAMLQDIAILTGAEYQALDMGLLVENTTIDQLGIARKVTISKDSTTLIADAASKDELQARISQLKKELSETDSVYDSEKLAERIAKLAGGVAVIKVGAATETELEDRKLRIEDAKNATFAAIEEGIVPGGGATLVHLSTVIPAIKEKLEDADERLGADIVQKALVAPAALIAQNAGIEGEVVVEKIMFSEWEIGYNAMTDTYENLLEAGVIDPAKVTRCALQNAASVAGMVLTTQAIVVDKPKPKAPTAAPPQGLMV.

The transit peptide at 1–6 (RFSVRA) directs the protein to the chloroplast. Phosphoserine is present on serine 50.

The protein belongs to the chaperonin (HSP60) family. In terms of assembly, oligomer of probably six alpha and six beta subunits.

It localises to the plastid. Its subcellular location is the chloroplast. This protein binds RuBisCO small and large subunits and is implicated in the assembly of the enzyme oligomer. The chain is RuBisCO large subunit-binding protein subunit alpha, chloroplastic from Brassica napus (Rape).